Here is a 591-residue protein sequence, read N- to C-terminus: Melatonin-related receptor (591 aa).

The Extracellular portion of the chain corresponds to 1–38 (MATVPKSNMGPTKAVPTPFGCIGCKLPKPDYPPALIIF). A helical membrane pass occupies residues 39–59 (MFCAMVITVVVDLIGNSMVIL). Residues 60-72 (AVTKNKKLRNSGN) are Cytoplasmic-facing. A helical membrane pass occupies residues 73–93 (IFVASLSVADMLVAIYPYPLM). Topologically, residues 94–111 (LYAMSVGGWDLSQLQCQM) are extracellular. A disulfide bridge links Cys109 with Cys186. A helical membrane pass occupies residues 112-132 (VGLVTGLSVVGSIFNITAIAI). Residues 133–151 (NRYCYICHSLQYKRIFSLR) lie on the Cytoplasmic side of the membrane. A helical transmembrane segment spans residues 152–172 (NTCIYLVVTWVMTVLAVLPNM). Residues 173–196 (YIGTIEYDPRTYTCIFNYVNNPAF) lie on the Extracellular side of the membrane. Residues 197 to 217 (TVTIVCIHFVLPLIIVGYCYT) form a helical membrane-spanning segment. Residues 218 to 247 (KIWIKVLAARDPAGQNPDNQFAEVRNFLTM) are Cytoplasmic-facing. Residues 248-268 (FVIFLLFAVCWCPVNVLTVLV) form a helical membrane-spanning segment. At 269 to 281 (AVIPKEMAGKIPN) the chain is on the extracellular side. The chain crosses the membrane as a helical span at residues 282-302 (WLYLAAYCIAYFNSCLNAIIY). Topologically, residues 303 to 591 (GILNESFRRE…DSDCSDEMAV (289 aa)) are cytoplasmic. The segment at 378–427 (LPGDASAPHSDRASVRPKPQTRSTSVYRKPASIHHKSISGHPKSASVYPK) is disordered.

It belongs to the G-protein coupled receptor 1 family. As to quaternary structure, homodimer, and heterodimer with MTNR1A and MTNR1B. Interacts with KAT5. Interacts with RTN4 isoform A/NOGO-A. Interacts with TGFBR1. Strongly expressed in the brain with highly restricted pattern of expression, confined to a subset of the ependymal cells of the third ventricle and a population of cells in the dorsomedial hypothalamic nucleus.

It localises to the cell membrane. The protein resides in the postsynaptic density. Its function is as follows. G protein-coupled receptor that plays a role in numerous physiological processes including regulation of energy metabolism, neurite outgrowth or cell migration. Promotes self-renewal and neuronal differentiation of neural progenitor cells through activation of the NOTCH and WNT/beta-catenin signaling pathways. Modulates the KAT5-dependent glucocorticoid receptor signaling by modulating KAT5 subcellular compartmentalisation. Also plays a role in the activation TGFBR1 in the absence of TGFBR2 by interfering with FKBP1A binding to TGFBR1, leading to induction of both canonical and non-canonical SMAD signaling pathways resulting in inhibition of proliferation or promotion of migration. The polypeptide is Melatonin-related receptor (Gpr50) (Mus musculus (Mouse)).